Here is a 139-residue protein sequence, read N- to C-terminus: MKVHIVAVGKLKNGYVAEGVKDYYERIKHYIPITMVETKQENPFNMTTKEGFHIVLDAQGKLMTSEEFASFIEDLLTTQSNDVYFYIGGPEGFSEAFKNNAQMRISLSLMTFPHELARLFFLEQLYRALTIIKGEKYHK.

S-adenosyl-L-methionine contacts are provided by residues Leu56, Gly88, and 107–112 (LSLMTF).

The protein belongs to the RNA methyltransferase RlmH family. Homodimer.

The protein resides in the cytoplasm. It catalyses the reaction pseudouridine(1915) in 23S rRNA + S-adenosyl-L-methionine = N(3)-methylpseudouridine(1915) in 23S rRNA + S-adenosyl-L-homocysteine + H(+). In terms of biological role, specifically methylates the pseudouridine at position 1915 (m3Psi1915) in 23S rRNA. The sequence is that of Ribosomal RNA large subunit methyltransferase H from Coprothermobacter proteolyticus (strain ATCC 35245 / DSM 5265 / OCM 4 / BT).